Here is a 1381-residue protein sequence, read N- to C-terminus: Regulator of G-protein signaling 12 (1381 aa).

Residues 21 to 98 (SVEVARGRAG…VLHMVIAEGT (78 aa)) enclose the PDZ domain. A phosphoserine mark is found at serine 171 and serine 194. Lysine 195 is covalently cross-linked (Glycyl lysine isopeptide (Lys-Gly) (interchain with G-Cter in SUMO2)). The PID domain maps to 223 to 390 (SILNVAMVVG…VLQFISVLYR (168 aa)). Disordered regions lie at residues 409–428 (ADAHQNNSTSSNSDSGIGNF), 442–528 (LGGG…GAAG), and 620–644 (RKTKEDKKSSKLGRGVALAQTSQRT). Positions 412–428 (HQNNSTSSNSDSGIGNF) are enriched in polar residues. An omega-N-methylarginine mark is found at arginine 524 and arginine 633. Residues serine 661 and serine 671 each carry the phosphoserine modification. The RGS domain occupies 715–832 (SFERLLQDPV…LKSQLYQECV (118 aa)). The disordered stretch occupies residues 842 to 942 (PDSQQVPSSP…ESQGSVSSAG (101 aa)). Residues 849 to 869 (SSPASKHSISSDHSNVSTPKK) are compositionally biased toward low complexity. A phosphoserine mark is found at serine 850 and serine 879. Basic and acidic residues predominate over residues 914–923 (DHGDHAHDAP). The residue at position 943 (serine 943) is a Phosphoserine. RBD domains follow at residues 962–1032 (KHCC…LEKR) and 1034–1104 (LFRL…LEER). Basic and acidic residues predominate over residues 1102–1117 (EERDPSRGKVSTDKQK). The disordered stretch occupies residues 1102–1169 (EERDPSRGKV…RDPRLSKREE (68 aa)). The span at 1122 to 1132 (KQNSAVNSSPR) shows a compositional bias: polar residues. The segment covering 1151-1169 (IRGENGKSARDPRLSKREE) has biased composition (basic and acidic residues). Residues 1187–1209 (AEEFFELISKAQSNRADDQRGLL) enclose the GoLoco domain. Disordered regions lie at residues 1227-1318 (SELA…QEGT) and 1347-1381 (LMGEGDISSPNSTLLPPPPTPQDTPGPPRPGTSRF). Residues 1261-1280 (SDSPATSPASAQSPCSAYSP) are compositionally biased toward low complexity. Over residues 1361–1381 (LPPPPTPQDTPGPPRPGTSRF) the composition is skewed to pro residues.

In terms of assembly, interacts with GNAI1, GNAI2 and GNAI3; the interactions are GDP-dependent. In terms of tissue distribution, expressed in brain.

The protein localises to the nucleus. Its subcellular location is the cytoplasm. It localises to the cell projection. It is found in the dendrite. The protein resides in the synapse. Regulates G protein-coupled receptor signaling cascades. Inhibits signal transduction by increasing the GTPase activity of G protein alpha subunits, thereby driving them into their inactive GDP-bound form. The polypeptide is Regulator of G-protein signaling 12 (Rgs12) (Mus musculus (Mouse)).